Reading from the N-terminus, the 93-residue chain is UPF0728 protein C10orf53 (93 aa).

Belongs to the UPF0728 family.

The protein is UPF0728 protein C10orf53 (C10orf53) of Homo sapiens (Human).